The sequence spans 255 residues: Phosphoribosylformylglycinamidine synthase subunit PurQ (255 aa).

Residues 6-255 (TLILRTPGTN…TNAVKWARQV (250 aa)) form the Glutamine amidotransferase type-1 domain. The active-site Nucleophile is Cys96. Active-site residues include His217 and Glu219.

In terms of assembly, part of the FGAM synthase complex composed of 1 PurL, 1 PurQ and 2 PurS subunits.

The protein resides in the cytoplasm. It catalyses the reaction N(2)-formyl-N(1)-(5-phospho-beta-D-ribosyl)glycinamide + L-glutamine + ATP + H2O = 2-formamido-N(1)-(5-O-phospho-beta-D-ribosyl)acetamidine + L-glutamate + ADP + phosphate + H(+). The enzyme catalyses L-glutamine + H2O = L-glutamate + NH4(+). Its pathway is purine metabolism; IMP biosynthesis via de novo pathway; 5-amino-1-(5-phospho-D-ribosyl)imidazole from N(2)-formyl-N(1)-(5-phospho-D-ribosyl)glycinamide: step 1/2. Its function is as follows. Part of the phosphoribosylformylglycinamidine synthase complex involved in the purines biosynthetic pathway. Catalyzes the ATP-dependent conversion of formylglycinamide ribonucleotide (FGAR) and glutamine to yield formylglycinamidine ribonucleotide (FGAM) and glutamate. The FGAM synthase complex is composed of three subunits. PurQ produces an ammonia molecule by converting glutamine to glutamate. PurL transfers the ammonia molecule to FGAR to form FGAM in an ATP-dependent manner. PurS interacts with PurQ and PurL and is thought to assist in the transfer of the ammonia molecule from PurQ to PurL. In Dehalococcoides mccartyi (strain ATCC BAA-2266 / KCTC 15142 / 195) (Dehalococcoides ethenogenes (strain 195)), this protein is Phosphoribosylformylglycinamidine synthase subunit PurQ.